Consider the following 415-residue polypeptide: Isocitrate dehydrogenase [NADP] (415 aa).

NADP(+) is bound by residues 77–79 and R84; that span reads TIT. T79 contributes to the substrate binding site. Substrate-binding positions include 96–102, R111, and R134; that span reads SPNGTIR. A Mn(2+)-binding site is contributed by D254. Residue K262 participates in NADP(+) binding. Mn(2+) is bound at residue D277. Residues 312–317 and N330 contribute to the NADP(+) site; that span reads GTVTRH.

The protein belongs to the isocitrate and isopropylmalate dehydrogenases family. As to quaternary structure, heterodimer. The cofactor is Mg(2+). It depends on Mn(2+) as a cofactor.

The protein resides in the cytoplasm. It carries out the reaction D-threo-isocitrate + NADP(+) = 2-oxoglutarate + CO2 + NADPH. Functionally, may supply 2-oxoglutarate for amino acid biosynthesis and ammonia assimilation via the glutamine synthetase/glutamate synthase (GS/GOGAT) pathway. The protein is Isocitrate dehydrogenase [NADP] of Nicotiana tabacum (Common tobacco).